The sequence spans 244 residues: tRNA (guanine-N(7)-)-methyltransferase (244 aa).

The segment covering 1-10 (MSDTPQSPAQ) has biased composition (polar residues). The disordered stretch occupies residues 1 to 20 (MSDTPQSPAQDSLAEHDEAR). Glu-74, Glu-99, Asp-126, and Asp-149 together coordinate S-adenosyl-L-methionine. Asp-149 is a catalytic residue. Substrate is bound by residues Lys-153, Asp-185, and 222–225 (TKFE).

It belongs to the class I-like SAM-binding methyltransferase superfamily. TrmB family.

The catalysed reaction is guanosine(46) in tRNA + S-adenosyl-L-methionine = N(7)-methylguanosine(46) in tRNA + S-adenosyl-L-homocysteine. Its pathway is tRNA modification; N(7)-methylguanine-tRNA biosynthesis. Its function is as follows. Catalyzes the formation of N(7)-methylguanine at position 46 (m7G46) in tRNA. This chain is tRNA (guanine-N(7)-)-methyltransferase, found in Pseudomonas aeruginosa (strain ATCC 15692 / DSM 22644 / CIP 104116 / JCM 14847 / LMG 12228 / 1C / PRS 101 / PAO1).